Reading from the N-terminus, the 449-residue chain is Glutamate--tRNA ligase 1 (449 aa).

Positions P11 to N21 match the 'HIGH' region motif. A 'KMSKS' region motif is present at residues P242–R246. Residue K245 coordinates ATP.

The protein belongs to the class-I aminoacyl-tRNA synthetase family. Glutamate--tRNA ligase type 1 subfamily. As to quaternary structure, monomer.

It localises to the cytoplasm. The catalysed reaction is tRNA(Glu) + L-glutamate + ATP = L-glutamyl-tRNA(Glu) + AMP + diphosphate. Its function is as follows. Catalyzes the attachment of glutamate to tRNA(Glu) in a two-step reaction: glutamate is first activated by ATP to form Glu-AMP and then transferred to the acceptor end of tRNA(Glu). The chain is Glutamate--tRNA ligase 1 from Parvibaculum lavamentivorans (strain DS-1 / DSM 13023 / NCIMB 13966).